We begin with the raw amino-acid sequence, 349 residues long: Probable myosin light chain kinase DDB_G0275057 (349 aa).

The disordered stretch occupies residues 1–33 (MGCFNSKEAGAGRPKTTTQQQQQATPEPTVTTA). Residues 16-33 (TTTQQQQQATPEPTVTTA) are compositionally biased toward low complexity. Residues 56 to 313 (YVVGKELGRG…AKQCLDDLWL (258 aa)) form the Protein kinase domain. Residues 62–70 (LGRGAFSVV) and Lys85 each bind ATP. Asp178 (proton acceptor) is an active-site residue.

Belongs to the protein kinase superfamily. CAMK Ser/Thr protein kinase family. CaMK subfamily.

The catalysed reaction is L-seryl-[myosin light chain] + ATP = O-phospho-L-seryl-[myosin light chain] + ADP + H(+). It carries out the reaction L-threonyl-[myosin light chain] + ATP = O-phospho-L-threonyl-[myosin light chain] + ADP + H(+). Its activity is regulated as follows. Does not have a calmodulin-binding domain. May phosphorylate a specific serine in the N-terminus of a myosin light chain. The protein is Probable myosin light chain kinase DDB_G0275057 of Dictyostelium discoideum (Social amoeba).